Reading from the N-terminus, the 421-residue chain is MDLEARVKKMGLGHEQGFGAPCLKCKEKCEGFELHFWRKICRNCKCGQEEHDVLLSNEEDRKVGKLFEDTKYTTLIAKLKSDGIPMYKRNVMILTNPVAAKKNISINTVTYEWAPPVHNQALARQYMQMLPKEKQPVAGSEGAQYRKKQLAKQLPAHDQDPSKCHELTPREVKEMEQFVKKYKNEALGVGDVKLPQEMDTQGPNRIYIPGGDRSTAAAVGAMEDKSAEQKGTQYSCYCCKLSMKEGDPAVYAERAGYDKLWHPACFVCSACSELLVDMIYFWKNGKLYCGRHYCDSEKPRCAGCDELIFSNEYTQAENQNWHLKHFCCFDCDNILAGEIYVMVNDKPVCKPCYVKNHAVVCQGCHNAIDPEVQRVTYNNFSWHASTECFLCSCCSKCLIGQKFMPVEGMVFCSVECKKMMS.

The 108-residue stretch at 92–199 (MILTNPVAAK…GDVKLPQEMD (108 aa)) folds into the PET domain. 3 consecutive LIM zinc-binding domains span residues 234-297 (YSCY…CDSE), 299-359 (PRCA…NHAV), and 362-421 (QGCH…KMMS).

Belongs to the prickle / espinas / testin family. Interacts via LIM domain 1 with ZYX. Interacts (via LIM domain 3) with ENAH and VASP. Interacts with ALKBH4, talin, actin, alpha-actinin, GRIP1 and PXN. Interacts (via LIM domain 2) with ACTL7A (via N-terminus). Heterodimer with ACTL7A; the heterodimer interacts with ENAH to form a heterotrimer.

Its subcellular location is the cytoplasm. The protein resides in the cell junction. The protein localises to the focal adhesion. In terms of biological role, scaffold protein that may play a role in cell adhesion, cell spreading and in the reorganization of the actin cytoskeleton. Plays a role in the regulation of cell proliferation. May act as a tumor suppressor. In Loxodonta africana (African elephant), this protein is Testin (TES).